Reading from the N-terminus, the 452-residue chain is Maltoporin (452 aa).

The first 25 residues, 1-25 (MMITLRKLPLAVAVAAGVMSAQAMA), serve as a signal peptide directing secretion.

It belongs to the porin LamB (TC 1.B.3) family. In terms of assembly, homotrimer formed of three 18-stranded antiparallel beta-barrels, containing three independent channels.

The protein resides in the cell outer membrane. It catalyses the reaction beta-maltose(in) = beta-maltose(out). Its function is as follows. Involved in the transport of maltose and maltodextrins. The sequence is that of Maltoporin from Salmonella agona (strain SL483).